The following is a 129-amino-acid chain: Follitropin subunit beta (129 aa).

The N-terminal stretch at 1–18 is a signal peptide; the sequence is MKSIQFCFFFCCWKAICC. Intrachain disulfides connect cysteine 21/cysteine 69, cysteine 35/cysteine 84, cysteine 38/cysteine 122, cysteine 46/cysteine 100, cysteine 50/cysteine 102, and cysteine 105/cysteine 112. 2 N-linked (GlcNAc...) asparagine glycosylation sites follow: asparagine 25 and asparagine 42.

It belongs to the glycoprotein hormones subunit beta family. Heterodimer. The active follitropin is a heterodimer composed of an alpha chain/CGA shared with other hormones and a unique beta chain/FSHB shown here.

It localises to the secreted. Its function is as follows. Together with the alpha chain CGA constitutes follitropin, the follicle-stimulating hormone, and provides its biological specificity to the hormone heterodimer. Binds FSHR, a G protein-coupled receptor, on target cells to activate downstream signaling pathways. Follitropin is involved in follicle development and spermatogenesis in reproductive organs. This is Follitropin subunit beta (FSHB) from Cavia porcellus (Guinea pig).